Consider the following 493-residue polypeptide: Probable cytosol aminopeptidase (493 aa).

2 residues coordinate Mn(2+): Lys-256 and Asp-261. The active site involves Lys-268. The Mn(2+) site is built by Asp-279, Asp-338, and Glu-340. Residue Arg-342 is part of the active site.

It belongs to the peptidase M17 family. Mn(2+) is required as a cofactor.

Its subcellular location is the cytoplasm. The catalysed reaction is Release of an N-terminal amino acid, Xaa-|-Yaa-, in which Xaa is preferably Leu, but may be other amino acids including Pro although not Arg or Lys, and Yaa may be Pro. Amino acid amides and methyl esters are also readily hydrolyzed, but rates on arylamides are exceedingly low.. The enzyme catalyses Release of an N-terminal amino acid, preferentially leucine, but not glutamic or aspartic acids.. Functionally, presumably involved in the processing and regular turnover of intracellular proteins. Catalyzes the removal of unsubstituted N-terminal amino acids from various peptides. This Phytoplasma australiense protein is Probable cytosol aminopeptidase.